The sequence spans 67 residues: DNA-directed RNA polymerase subunit omega (67 aa).

The protein belongs to the RNA polymerase subunit omega family. In terms of assembly, the RNAP catalytic core consists of 2 alpha, 1 beta, 1 beta' and 1 omega subunit. When a sigma factor is associated with the core the holoenzyme is formed, which can initiate transcription.

It carries out the reaction RNA(n) + a ribonucleoside 5'-triphosphate = RNA(n+1) + diphosphate. Functionally, promotes RNA polymerase assembly. Latches the N- and C-terminal regions of the beta' subunit thereby facilitating its interaction with the beta and alpha subunits. In Legionella pneumophila (strain Paris), this protein is DNA-directed RNA polymerase subunit omega.